Here is a 314-residue protein sequence, read N- to C-terminus: Malate dehydrogenase (314 aa).

NAD(+) contacts are provided by residues 7-13 and D34; that span reads GAAGGIG. 2 residues coordinate substrate: R81 and R87. Residues N94 and 117–119 contribute to the NAD(+) site; that span reads ITN. Positions 119 and 153 each coordinate substrate. H177 functions as the Proton acceptor in the catalytic mechanism. Residue M230 coordinates NAD(+).

Belongs to the LDH/MDH superfamily. MDH type 1 family. In terms of assembly, homodimer.

It catalyses the reaction (S)-malate + NAD(+) = oxaloacetate + NADH + H(+). Its function is as follows. Catalyzes the reversible oxidation of malate to oxaloacetate. The sequence is that of Malate dehydrogenase from Glaesserella parasuis serovar 5 (strain SH0165) (Haemophilus parasuis).